The following is a 163-amino-acid chain: SKP1-like protein 4 (163 aa).

Positions 105–163 (ILAANYLNIGGLLDLTCKAVADQMRGKTPEQMRAHFNIKNDYTPEEEAEVRNENKWAFE) are interaction with the F-box domain of F-box proteins.

It belongs to the SKP1 family. As to quaternary structure, part of a SCF (SKP1-cullin-F-box) protein ligase complex. Interacts with At1g56610, At1g67340, At3g62230, At3g59000, At4g27050, At1g55000, SKIP16 and SKIP32. Mostly expressed in inflorescence and siliques, and, to a lower extent, in seedlings, roots, and stems.

Its subcellular location is the nucleus. It functions in the pathway protein modification; protein ubiquitination. Involved in ubiquitination and subsequent proteasomal degradation of target proteins. Together with CUL1, RBX1 and a F-box protein, it forms a SCF E3 ubiquitin ligase complex. The functional specificity of this complex depends on the type of F-box protein. In the SCF complex, it serves as an adapter that links the F-box protein to CUL1. In Arabidopsis thaliana (Mouse-ear cress), this protein is SKP1-like protein 4 (ASK4).